Reading from the N-terminus, the 552-residue chain is ATP synthase subunit alpha (552 aa).

173–180 (GDRQTGKT) contacts ATP. Positions 516–552 (DGKPLVNEPAPSPLDPGLVRQESIPVHRPAARKDDEG) are disordered.

Belongs to the ATPase alpha/beta chains family. F-type ATPases have 2 components, CF(1) - the catalytic core - and CF(0) - the membrane proton channel. CF(1) has five subunits: alpha(3), beta(3), gamma(1), delta(1), epsilon(1). CF(0) has three main subunits: a(1), b(2) and c(9-12). The alpha and beta chains form an alternating ring which encloses part of the gamma chain. CF(1) is attached to CF(0) by a central stalk formed by the gamma and epsilon chains, while a peripheral stalk is formed by the delta and b chains.

The protein resides in the cell membrane. It carries out the reaction ATP + H2O + 4 H(+)(in) = ADP + phosphate + 5 H(+)(out). Its function is as follows. Produces ATP from ADP in the presence of a proton gradient across the membrane. The alpha chain is a regulatory subunit. In Frankia casuarinae (strain DSM 45818 / CECT 9043 / HFP020203 / CcI3), this protein is ATP synthase subunit alpha.